Reading from the N-terminus, the 222-residue chain is Peptidyl-prolyl cis-trans isomerase FKBP7 (222 aa).

The first 23 residues, 1-23, serve as a signal peptide directing secretion; it reads MPKTMHFLFRFIVFFYLWGLFTA. N-linked (GlcNAc...) asparagine glycosylation is present at Asn45. The region spanning 53-145 is the PPIase FKBP-type domain; the sequence is GDLLNAHYDG…IFEIELYAVT (93 aa). EF-hand domains are found at residues 145 to 180 and 189 to 222; these read TKGP…EFEK and YQDA…HDEL. The Ca(2+) site is built by Asp158, Asp160, Asp162, Gln164, Glu169, Asp202, Asp204, Asp206, and Glu213. The Prevents secretion from ER signature appears at 219 to 222; sequence HDEL.

In terms of processing, glycosylated.

It is found in the endoplasmic reticulum lumen. The catalysed reaction is [protein]-peptidylproline (omega=180) = [protein]-peptidylproline (omega=0). Its function is as follows. PPIases accelerate the folding of proteins during protein synthesis. The protein is Peptidyl-prolyl cis-trans isomerase FKBP7 (FKBP7) of Pongo abelii (Sumatran orangutan).